A 614-amino-acid chain; its full sequence is Probable ATP-dependent RNA helicase DDX5 (614 aa).

Over residues 1–15 (MSSYSSDRDRGRDRG) the composition is skewed to basic and acidic residues. A disordered region spans residues 1–39 (MSSYSSDRDRGRDRGFGAPRFGGSRTGPLSGKKFGNPGE). Ser24 carries the post-translational modification Phosphoserine. Lys32 carries the post-translational modification N6-acetyllysine; alternate. A Glycyl lysine isopeptide (Lys-Gly) (interchain with G-Cter in SUMO2); alternate cross-link involves residue Lys32. 2 positions are modified to N6-acetyllysine: Lys33 and Lys40. Lys45 participates in a covalent cross-link: Glycyl lysine isopeptide (Lys-Gly) (interchain with G-Cter in SUMO2). A Glycyl lysine isopeptide (Lys-Gly) (interchain with G-Cter in SUMO2); alternate cross-link involves residue Lys53. Residue Lys53 forms a Glycyl lysine isopeptide (Lys-Gly) (interchain with G-Cter in SUMO); alternate linkage. Residue Lys53 forms a Glycyl lysine isopeptide (Lys-Gly) (interchain with G-Cter in SUMO1); alternate linkage. Residues 94–122 (LNFYEANFPANVMDVIARQNFTEPTAIQA) carry the Q motif motif. Residues 114–116 (FTE), Gln121, and 138–145 (AQTGSGKT) contribute to the ATP site. A Helicase ATP-binding domain is found at 125-300 (WPVALSGLDM…EDFLKDYIHI (176 aa)). The residue at position 236 (Lys236) is an N6-acetyllysine. The DEAD box motif lies at 248–251 (DEAD). Position 297 is a phosphotyrosine (Tyr297). Residues 328–475 (KLIRLMEEIM…AINPKLLQLV (148 aa)) enclose the Helicase C-terminal domain. Glycyl lysine isopeptide (Lys-Gly) (interchain with G-Cter in SUMO2) cross-links involve residues Lys340, Lys343, Lys388, Lys391, Lys411, Lys437, Lys451, and Lys470. The tract at residues 477–504 (DRGSGRSRGRGGMKDDRRDRYSAGKRGG) is disordered. A transactivation domain region spans residues 477 to 614 (DRGSGRSRGR…GYPMPTGYSQ (138 aa)). Ser480 bears the Phosphoserine mark. The segment covering 488–498 (GMKDDRRDRYS) has biased composition (basic and acidic residues). Lys523 participates in a covalent cross-link: Glycyl lysine isopeptide (Lys-Gly) (interchain with G-Cter in SUMO2).

Belongs to the DEAD box helicase family. DDX5/DBP2 subfamily. Identified in the spliceosome C complex. Component of a ribonucleoprotein complex containing mRNAs and RNA-binding proteins including DDX5, HNRNPH2 and SRSF1 as well as splicing regulator ARVCF. Interacts with RBM4; the interaction occurs in an RNA-independent manner. Interacts with AGO1 and AGO2. Interacts with ESR1, AR, EP300, CREBBP, POLR2A, TP53, RUNX2 and HDAC1. Self-associates. Interacts with DDX17. Interacts with BRDT. The large PER complex involved in the repression of transcriptional termination is composed of at least PER2, CDK9, DDX5, DHX9, NCBP1 and POLR2A (active). Interacts with DHX36; this interaction occurs in a RNA-dependent manner. Interacts with NUPR1. Interacts with ERCC6. Interacts with DDX3X in the cytoplasm; this interaction may be more efficient when both proteins are unphosphorylated. Sumoylated; sumoylation, promoted by PIAS1, promotes interaction with HDAC1 and transcriptional repression activity. Sumoylation also significantly increases stability, and reduces polyubiquitination. In terms of processing, polyubiquitinated, leading to proteasomal degradation. Post-translationally, weakly phosphorylated in the G1/S phase of the cell cycle and much more at G2/M, especially at Thr and Tyr residues.

Its subcellular location is the nucleus. The protein localises to the nucleolus. The protein resides in the cytoplasm. The catalysed reaction is ATP + H2O = ADP + phosphate + H(+). Its function is as follows. Involved in the alternative regulation of pre-mRNA splicing; its RNA helicase activity is necessary for increasing tau exon 10 inclusion and occurs in a RBM4-dependent manner. Binds to the tau pre-mRNA in the stem-loop region downstream of exon 10. The rate of ATP hydrolysis is highly stimulated by single-stranded RNA. Involved in transcriptional regulation; the function is independent of the RNA helicase activity. Transcriptional coactivator for androgen receptor AR but probably not ESR1. Synergizes with DDX17 and SRA1 RNA to activate MYOD1 transcriptional activity and involved in skeletal muscle differentiation. Transcriptional coactivator for p53/TP53 and involved in p53/TP53 transcriptional response to DNA damage and p53/TP53-dependent apoptosis. Transcriptional coactivator for RUNX2 and involved in regulation of osteoblast differentiation. Acts as a transcriptional repressor in a promoter-specific manner; the function probably involves association with histone deacetylases, such as HDAC1. As component of a large PER complex is involved in the inhibition of 3' transcriptional termination of circadian target genes such as PER1 and NR1D1 and the control of the circadian rhythms. This chain is Probable ATP-dependent RNA helicase DDX5 (Ddx5), found in Mus musculus (Mouse).